The chain runs to 860 residues: Probable leucine--tRNA ligase, cytoplasmic (860 aa).

The short motif at 41–51 (PYMNGKLHLGH) is the 'HIGH' region element. Positions 552–556 (KMSKS) match the 'KMSKS' region motif. K555 contributes to the ATP binding site.

This sequence belongs to the class-I aminoacyl-tRNA synthetase family.

It is found in the cytoplasm. The catalysed reaction is tRNA(Leu) + L-leucine + ATP = L-leucyl-tRNA(Leu) + AMP + diphosphate. This Enterocytozoon bieneusi (strain H348) (Microsporidian parasite) protein is Probable leucine--tRNA ligase, cytoplasmic.